The primary structure comprises 454 residues: MATQPPPARPPPPLTSSPYPYAAAPDIIRAHQKDAYFQGVLANRLSDLHRRLRGARSAHAWAAETRTFAAALYLCLTTLLGNRTLGEEYCDLVQVEEAPSKLFASSSSKAADDHIYENGLGGGGDGGPLLPSLPRRAGYILTAIVLPHLASRALPSVRSAIRKRLQSRLATLSRRRQQTGTKSGSGRGGRGGGGGITEYRVLRYLLTHLTPLTSGAHFRAATLAVFYFTGAYYELSKWVWGLRYVFTTRAGRVVDDDHNRHHHSPQHGGGNGGRAGYEVLGVLLVVQMAVRAWLHVREQLSSGSVAGGGGEEEEDGEDGFRERTAFGPGTNVDVSLDEHAFTSNNELLGGGGGGGGSSSQRSLGEIGAMAHTPVLKAGRARYDLGTSDKVMGWIKGAQQRKCTLCLEELKDPAATQCGHVFCWACIGDWVREKPECPLCRREAMVQHILPLRAA.

Over 1-23 (MATQPPPARPPPPLTSSPYPYAA) the chain is Peroxisomal matrix. Residues 24-53 (APDIIRAHQKDAYFQGVLANRLSDLHRRLR) traverse the membrane as a helical segment. A topological domain (cytoplasmic) is located at residue Gly-54. The chain crosses the membrane as a helical span at residues 55–76 (ARSAHAWAAETRTFAAALYLCL). The Peroxisomal matrix segment spans residues 77 to 132 (TTLLGNRTLGEEYCDLVQVEEAPSKLFASSSSKAADDHIYENGLGGGGDGGPLLPS). The chain crosses the membrane as a helical span at residues 133–165 (LPRRAGYILTAIVLPHLASRALPSVRSAIRKRL). Residues 166-201 (QSRLATLSRRRQQTGTKSGSGRGGRGGGGGITEYRV) lie on the Cytoplasmic side of the membrane. Residues 171-194 (TLSRRRQQTGTKSGSGRGGRGGGG) are disordered. The span at 183 to 194 (SGSGRGGRGGGG) shows a compositional bias: gly residues. Residues 202–229 (LRYLLTHLTPLTSGAHFRAATLAVFYFT) traverse the membrane as a helical segment. Topologically, residues 230-276 (GAYYELSKWVWGLRYVFTTRAGRVVDDDHNRHHHSPQHGGGNGGRAG) are peroxisomal matrix. A helical membrane pass occupies residues 277 to 296 (YEVLGVLLVVQMAVRAWLHV). The Cytoplasmic portion of the chain corresponds to 297–454 (REQLSSGSVA…VQHILPLRAA (158 aa)). The disordered stretch occupies residues 302-329 (SGSVAGGGGEEEEDGEDGFRERTAFGPG). Residues Cys-402, Cys-405, Cys-417, His-419, Cys-422, Cys-425, Cys-436, and Cys-439 each coordinate Zn(2+). An RING-type zinc finger spans residues 402-440 (CTLCLEELKDPAATQCGHVFCWACIGDWVREKPECPLCR).

The protein belongs to the pex2/pex10/pex12 family. As to quaternary structure, component of the PEX2-PEX10-PEX12 retrotranslocation channel, composed of PEX2, PEX10 and PEX12.

It localises to the peroxisome membrane. The catalysed reaction is S-ubiquitinyl-[E2 ubiquitin-conjugating enzyme]-L-cysteine + [acceptor protein]-L-lysine = [E2 ubiquitin-conjugating enzyme]-L-cysteine + N(6)-ubiquitinyl-[acceptor protein]-L-lysine.. The protein operates within protein modification; protein ubiquitination. The E3 ubiquitin-protein ligase activity is stimulated by PEX12. In terms of biological role, E3 ubiquitin-protein ligase component of a retrotranslocation channel required for peroxisome organization by mediating export of the PEX5 receptor from peroxisomes to the cytosol, thereby promoting PEX5 recycling. The retrotranslocation channel is composed of PEX2, PEX10 and PEX12; each subunit contributing transmembrane segments that coassemble into an open channel that specifically allows the passage of PEX5 through the peroxisomal membrane. PEX10 also regulates PEX5 recycling by acting as a E3 ubiquitin-protein ligase. When PEX5 recycling is compromised, PEX10 catalyzes polyubiquitination of PEX5 during its passage through the retrotranslocation channel, leading to its degradation. The sequence is that of Peroxisome assembly protein 10 from Thermothelomyces thermophilus (strain ATCC 42464 / BCRC 31852 / DSM 1799) (Sporotrichum thermophile).